We begin with the raw amino-acid sequence, 885 residues long: Cytosolic carboxypeptidase-like protein 5 (885 aa).

The Peptidase M14 domain occupies 150–576 (YPFSYAECQD…AVAVAALDMA (427 aa)). The Zn(2+) site is built by His247 and Glu250. Disordered stretches follow at residues 341 to 364 (SGSALKTSNQSNTSPPVATPTERE) and 392 to 428 (ESWEKSGVQREAEHSDENESAQSRGETNSAPSEQVPP). The span at 344–356 (ALKTSNQSNTSPP) shows a compositional bias: polar residues. Residues 393–408 (SWEKSGVQREAEHSDE) are compositionally biased toward basic and acidic residues. Residues 411 to 428 (SAQSRGETNSAPSEQVPP) are compositionally biased toward polar residues. Zn(2+) is bound at residue His440. Residue Glu522 is the Proton donor/acceptor of the active site. The segment covering 606 to 668 (STGLTSNNRR…KSSPSFTFGT (63 aa)) has biased composition (polar residues). 2 disordered regions span residues 606–788 (STGL…RTAL) and 866–885 (ALLKNSSRQTDQHIHRSLPT). Over residues 682 to 691 (RECKAQEKRR) the composition is skewed to basic and acidic residues. Over residues 712–749 (LSAPVRAPLSPSSSSSSSSSSPSSSSSAPGPGSISLAG) the composition is skewed to low complexity.

The protein belongs to the peptidase M14 family. Requires Zn(2+) as cofactor.

Its subcellular location is the cytoplasm. It localises to the cytosol. The protein localises to the nucleus. It is found in the cytoskeleton. The protein resides in the spindle. Its subcellular location is the midbody. It catalyses the reaction gamma-L-glutamyl-L-glutamyl-[protein] + H2O = L-glutamyl-[protein] + L-glutamate. The enzyme catalyses (L-glutamyl)(n+1)-gamma-L-glutamyl-L-glutamyl-[protein] + H2O = (L-glutamyl)(n)-gamma-L-glutamyl-L-glutamyl-[protein] + L-glutamate. It carries out the reaction C-terminal L-alpha-aminoacyl-L-glutamyl-[tubulin] + H2O = C-terminal L-alpha-aminoacyl-[tubulin] + L-glutamate. The catalysed reaction is C-terminal L-alpha-aminoacyl-L-glutamyl-L-glutamyl-[tubulin] + H2O = C-terminal L-alpha-aminoacyl-L-glutamyl-[tubulin] + L-glutamate. In terms of biological role, metallocarboxypeptidase that mediates deglutamylation of tubulin and non-tubulin target proteins. Catalyzes the removal of polyglutamate side chains present on the gamma-carboxyl group of glutamate residues within the C-terminal tail of alpha- and beta-tubulin. Cleaves alpha- and gamma-linked polyglutamate tubulin side-chain, as well as the branching point glutamate. Also catalyzes the removal of alpha-linked glutamate residues from the carboxy-terminus of alpha-tubulin. The protein is Cytosolic carboxypeptidase-like protein 5 (agbl5) of Danio rerio (Zebrafish).